The chain runs to 71 residues: DNA-directed RNA polymerase subunit epsilon (71 aa).

It belongs to the RNA polymerase subunit epsilon family. As to quaternary structure, RNAP is composed of a core of 2 alpha, a beta and a beta' subunit. The core is associated with a delta subunit, and at least one of epsilon or omega. When a sigma factor is associated with the core the holoenzyme is formed, which can initiate transcription.

It carries out the reaction RNA(n) + a ribonucleoside 5'-triphosphate = RNA(n+1) + diphosphate. A non-essential component of RNA polymerase (RNAP). The polypeptide is DNA-directed RNA polymerase subunit epsilon (Geobacillus kaustophilus (strain HTA426)).